Reading from the N-terminus, the 150-residue chain is Large ribosomal subunit protein bL9 (150 aa).

Belongs to the bacterial ribosomal protein bL9 family.

Binds to the 23S rRNA. In Limosilactobacillus fermentum (strain NBRC 3956 / LMG 18251) (Lactobacillus fermentum), this protein is Large ribosomal subunit protein bL9.